We begin with the raw amino-acid sequence, 377 residues long: tRNA pseudouridine synthase Pus10 (377 aa).

Catalysis depends on Asp206, which acts as the Nucleophile. Residues Tyr270 and Tyr339 each coordinate substrate.

Belongs to the pseudouridine synthase Pus10 family.

It carries out the reaction uridine(54) in tRNA = pseudouridine(54) in tRNA. The catalysed reaction is uridine(55) in tRNA = pseudouridine(55) in tRNA. Responsible for synthesis of pseudouridine from uracil-54 and uracil-55 in the psi GC loop of transfer RNAs. This is tRNA pseudouridine synthase Pus10 from Picrophilus torridus (strain ATCC 700027 / DSM 9790 / JCM 10055 / NBRC 100828 / KAW 2/3).